A 377-amino-acid chain; its full sequence is E3 ubiquitin-protein ligase rififylin (377 aa).

Residues 55–107 form an FYVE-type zinc finger; sequence TGSEPSCKACGVHFASTTRKQTCLDCKKNFCMTCSSQEGNGPRLCLLCLRFRA. One can recognise an SAP 1 domain in the interval 115 to 134; that stretch reads LMKMKVKDLRDYLSLHDIST. Residues 176–249 are disordered; sequence LTQPQTSTVP…SVDSEDSFVP (74 aa). A compositionally biased stretch (polar residues) spans 190 to 212; it reads GLPSSPAQVTSVPLAQDQETQQA. Residues 235–245 show a composition bias toward acidic residues; it reads EDETQSVDSED. Residues S240, S243, S246, and S254 each carry the phosphoserine modification. The 15-residue stretch at 264-278 folds into the SAP 2 domain; it reads IEGLTVRQLKEILAR. An RING-type zinc finger spans residues 330–365; the sequence is CKICMDSPIDCVLLECGHMVTCTKCGKRMNECPICR.

As to quaternary structure, interacts with CASP8 and CASP10. Interacts with RIPK1 (via protein kinase domain); involved in RIPK1 ubiquitination. Interacts with PRR5L. Interacts (via RING-type zinc finger) with p53/TP53; involved in p53/TP53 ubiquitination. Interacts (via RING-type zinc finger) with MDM2; the interaction stabilizes MDM2. Post-translationally, autoubiquitinated. Palmitoylated. In terms of processing, undergoes caspase-mediated cleavage upon death-receptor activation, by TNFSF10 for instance. May be mediated by the caspases CASP8 and CASP10 in a negative feedback loop. As to expression, ubiquitous. Detected in heart, brain, spleen, lung, liver, skeletal muscle, kidney, testis, thymus, whole embryo and embryonic stem cells.

Its subcellular location is the cytoplasm. It is found in the cytosol. The protein localises to the cell membrane. The protein resides in the recycling endosome membrane. The enzyme catalyses S-ubiquitinyl-[E2 ubiquitin-conjugating enzyme]-L-cysteine + [acceptor protein]-L-lysine = [E2 ubiquitin-conjugating enzyme]-L-cysteine + N(6)-ubiquitinyl-[acceptor protein]-L-lysine.. The protein operates within protein modification; protein ubiquitination. In terms of biological role, E3 ubiquitin-protein ligase that regulates several biological processes through the ubiquitin-mediated proteasomal degradation of various target proteins. Mediates 'Lys-48'-linked polyubiquitination of PRR5L and its subsequent proteasomal degradation thereby indirectly regulating cell migration through the mTORC2 complex. Also ubiquitinates the caspases CASP8 and CASP10, promoting their proteasomal degradation, to negatively regulate apoptosis downstream of death domain receptors. Also negatively regulates the tumor necrosis factor-mediated signaling pathway through targeting of RIPK1 to ubiquitin-mediated proteasomal degradation. Negatively regulates p53/TP53 through its direct ubiquitination and targeting to proteasomal degradation. Indirectly, may also negatively regulate p53/TP53 through ubiquitination and degradation of SFN. May also play a role in endocytic recycling. In Mus musculus (Mouse), this protein is E3 ubiquitin-protein ligase rififylin.